The sequence spans 489 residues: uncharacterized protein (489 aa).

The region spanning 2-84 (IKITVKRFNG…GMIIEPLRGF (83 aa)) is the 2Fe-2S ferredoxin-type domain. Residues Cys48, Cys53, Cys56, and Cys68 each coordinate [2Fe-2S] cluster. 4Fe-4S ferredoxin-type domains are found at residues 123-155 (KYVEENKELRGCIDCLSCLSVCPAREVSDYPGP) and 177-205 (TAYFENIYNCTTCAKCVEVCPKEIDIVHR). The [4Fe-4S] cluster site is built by Cys134, Cys137, Cys140, Cys144, Cys186, Cys189, Cys192, and Cys196.

Belongs to the succinate dehydrogenase/fumarate reductase iron-sulfur protein family.

This is an uncharacterized protein from Methanocaldococcus jannaschii (strain ATCC 43067 / DSM 2661 / JAL-1 / JCM 10045 / NBRC 100440) (Methanococcus jannaschii).